The sequence spans 468 residues: BTB and MATH domain-containing protein 45 (468 aa).

Positions 7–124 (VFELSHVFKD…DDSIIIEVLV (118 aa)) constitute an MATH domain. 2 BTB domains span residues 148-215 (SDGI…IDDD) and 304-368 (SDVI…IDDL).

This is BTB and MATH domain-containing protein 45 (bath-45) from Caenorhabditis elegans.